We begin with the raw amino-acid sequence, 281 residues long: 40S small subunit processome assembly factor 1 (281 aa).

Residues 29 to 141 form a disordered region; that stretch reads LGETEGETEQ…DEDEPAKNKT (113 aa). A phosphoserine mark is found at Ser67 and Ser75. N6-acetyllysine is present on Lys172. A disordered region spans residues 221–254; it reads ETDIFKKKKKKGRGQEDRRSKKSAPSILSSGQVG. A Phosphoserine modification is found at Ser267.

Part of the small subunit (SSU) processome, composed of more than 70 proteins and the RNA chaperone small nucleolar RNA (snoRNA) U3.

Its subcellular location is the chromosome. It is found in the nucleus. The protein localises to the nucleolus. Its function is as follows. Part of the small subunit (SSU) processome, first precursor of the small eukaryotic ribosomal subunit. During the assembly of the SSU processome in the nucleolus, many ribosome biogenesis factors, an RNA chaperone and ribosomal proteins associate with the nascent pre-rRNA and work in concert to generate RNA folding, modifications, rearrangements and cleavage as well as targeted degradation of pre-ribosomal RNA by the RNA exosome. Prevents helicase DHX37 to be recruited before post-A1 state. This is 40S small subunit processome assembly factor 1 from Mus musculus (Mouse).